The following is a 70-amino-acid chain: Brevinin-1Vb (70 aa).

The N-terminal stretch at 1 to 22 is a signal peptide; the sequence is MFTLKKSLLLLFFLGTINLSLC. Residues 23–44 constitute a propeptide that is removed on maturation; the sequence is EEERNAEEERRDEPDEMNVEVE. C64 and C70 form a disulfide bridge.

In terms of tissue distribution, expressed by the skin glands.

The protein resides in the secreted. Antimicrobial peptide. The sequence is that of Brevinin-1Vb from Odorrana versabilis (Chinese bamboo leaf odorous frog).